The chain runs to 210 residues: Nucleoside triphosphate pyrophosphatase (210 aa).

Aspartate 79 functions as the Proton acceptor in the catalytic mechanism.

This sequence belongs to the Maf family. The cofactor is a divalent metal cation.

The protein localises to the cytoplasm. The enzyme catalyses a ribonucleoside 5'-triphosphate + H2O = a ribonucleoside 5'-phosphate + diphosphate + H(+). The catalysed reaction is a 2'-deoxyribonucleoside 5'-triphosphate + H2O = a 2'-deoxyribonucleoside 5'-phosphate + diphosphate + H(+). Its function is as follows. Nucleoside triphosphate pyrophosphatase. May have a dual role in cell division arrest and in preventing the incorporation of modified nucleotides into cellular nucleic acids. This chain is Nucleoside triphosphate pyrophosphatase, found in Mycolicibacterium paratuberculosis (strain ATCC BAA-968 / K-10) (Mycobacterium paratuberculosis).